Reading from the N-terminus, the 333-residue chain is Holliday junction branch migration complex subunit RuvB (333 aa).

Residues 1–182 (MDERLVSGSA…FGVISRLEYY (182 aa)) are large ATPase domain (RuvB-L). ATP-binding positions include L21, R22, G63, K66, T67, T68, 129–131 (EDY), R172, Y182, and R219. T67 contacts Mg(2+). The small ATPAse domain (RuvB-S) stretch occupies residues 183–253 (QVDQLAQIIE…LAVEALERLQ (71 aa)). The interval 256–333 (RLGLDHIDHK…AHLGMEVPKR (78 aa)) is head domain (RuvB-H). R311 and R316 together coordinate DNA.

Belongs to the RuvB family. As to quaternary structure, homohexamer. Forms an RuvA(8)-RuvB(12)-Holliday junction (HJ) complex. HJ DNA is sandwiched between 2 RuvA tetramers; dsDNA enters through RuvA and exits via RuvB. An RuvB hexamer assembles on each DNA strand where it exits the tetramer. Each RuvB hexamer is contacted by two RuvA subunits (via domain III) on 2 adjacent RuvB subunits; this complex drives branch migration. In the full resolvosome a probable DNA-RuvA(4)-RuvB(12)-RuvC(2) complex forms which resolves the HJ.

It localises to the cytoplasm. The catalysed reaction is ATP + H2O = ADP + phosphate + H(+). In terms of biological role, the RuvA-RuvB-RuvC complex processes Holliday junction (HJ) DNA during genetic recombination and DNA repair, while the RuvA-RuvB complex plays an important role in the rescue of blocked DNA replication forks via replication fork reversal (RFR). RuvA specifically binds to HJ cruciform DNA, conferring on it an open structure. The RuvB hexamer acts as an ATP-dependent pump, pulling dsDNA into and through the RuvAB complex. RuvB forms 2 homohexamers on either side of HJ DNA bound by 1 or 2 RuvA tetramers; 4 subunits per hexamer contact DNA at a time. Coordinated motions by a converter formed by DNA-disengaged RuvB subunits stimulates ATP hydrolysis and nucleotide exchange. Immobilization of the converter enables RuvB to convert the ATP-contained energy into a lever motion, pulling 2 nucleotides of DNA out of the RuvA tetramer per ATP hydrolyzed, thus driving DNA branch migration. The RuvB motors rotate together with the DNA substrate, which together with the progressing nucleotide cycle form the mechanistic basis for DNA recombination by continuous HJ branch migration. Branch migration allows RuvC to scan DNA until it finds its consensus sequence, where it cleaves and resolves cruciform DNA. The sequence is that of Holliday junction branch migration complex subunit RuvB from Geobacillus thermodenitrificans (strain NG80-2).